The following is a 657-amino-acid chain: Tyrosine-protein phosphatase vhp-1 (657 aa).

One can recognise a Rhodanese domain in the interval 21-151 (APDTTLVVDC…FAQQYPQLCE (131 aa)). In terms of domain architecture, Tyrosine-protein phosphatase spans 175–318 (GITLITPNIY…LLEYENVLIK (144 aa)). Cys262 acts as the Phosphocysteine intermediate in catalysis. Disordered regions lie at residues 353–426 (SNCV…MDLG), 539–563 (VPAG…SSSA), and 581–657 (PAST…PCHQ). Over residues 366 to 405 (SPSSPSVSEGSAASEPETSSSAASSSSTASAPPSMPSTSE) the composition is skewed to low complexity. Positions 406–419 (QGTSSGTVNVNGKR) are enriched in polar residues. Low complexity-rich tracts occupy residues 542–563 (GSSS…SSSA) and 581–597 (PAST…TSRA).

The protein belongs to the protein-tyrosine phosphatase family. Non-receptor class dual specificity subfamily. May interact with pmk-3. Expressed in the pharynx, intestine, neurons and vulval hypodermal cells.

The catalysed reaction is O-phospho-L-tyrosyl-[protein] + H2O = L-tyrosyl-[protein] + phosphate. In terms of biological role, acts preferentially on the c-Jun N-terminal kinase (JNK) and p38 MAPKs. Plays an important role in the heavy metal stress response and in axon regeneration by negatively regulating the kgb-1 (JNK-like) and the pmk-1 (p38-type) MAPK signaling pathways. This chain is Tyrosine-protein phosphatase vhp-1 (vhp-1), found in Caenorhabditis elegans.